We begin with the raw amino-acid sequence, 559 residues long: MRSSIIKEGYQKAPHRSLLRATGLKDEDFGKPFIGVANSYIDIIPGHFFLQEYGRIIKEEIRAAGGIPFEFNTIGVDDGIAMGHDGMLYSLPSRELIADCIETVMNAHKLDAMICIPNCDKIVPGMLLGALRVNVPTVFVSGGPMKAGRLKDGTKVDLASAFEAVGKRARNQISDEELREIECAACPGGGSCSGMFTANSMNTLCEAMGVALPGNGTIPALTKEREELIRKAARRIVEIALDERYAFRNILNKEAIHNAFVVDMAMGGSTNTVLHMMAIAKEREADFDLRKINEIAKEVSHIAKISPALYTVHMEDINRAGGVNAVMNEINRRGGVLKTEALTVSGESMGERIAGAKILDTQIIHTLENPYSAVGGLKILYGNLAEQGAVLKTAAMDAKMRKFTGKAVCFDSQEEAIAGIVGGKVKEGDVVVIRYEGPKGGPGMQEMLSPTSLIMGMNLGDKVALITDGRFSGATRGACIGHVSPEAAEGGMIGLLQEGDLIRIDVEEGVLEVLLEEAEIQKRRASFSPKTKTVASKWLKRYQLLVSNAASGAILKTEL.

Asp-78 lines the Mg(2+) pocket. [2Fe-2S] cluster is bound at residue Cys-119. 2 residues coordinate Mg(2+): Asp-120 and Lys-121. Lys-121 carries the N6-carboxylysine modification. Position 192 (Cys-192) interacts with [2Fe-2S] cluster. Glu-446 is a binding site for Mg(2+). Residue Ser-472 is the Proton acceptor of the active site.

The protein belongs to the IlvD/Edd family. As to quaternary structure, homodimer. [2Fe-2S] cluster serves as cofactor. Mg(2+) is required as a cofactor.

It carries out the reaction (2R)-2,3-dihydroxy-3-methylbutanoate = 3-methyl-2-oxobutanoate + H2O. The catalysed reaction is (2R,3R)-2,3-dihydroxy-3-methylpentanoate = (S)-3-methyl-2-oxopentanoate + H2O. Its pathway is amino-acid biosynthesis; L-isoleucine biosynthesis; L-isoleucine from 2-oxobutanoate: step 3/4. It functions in the pathway amino-acid biosynthesis; L-valine biosynthesis; L-valine from pyruvate: step 3/4. Functions in the biosynthesis of branched-chain amino acids. Catalyzes the dehydration of (2R,3R)-2,3-dihydroxy-3-methylpentanoate (2,3-dihydroxy-3-methylvalerate) into 2-oxo-3-methylpentanoate (2-oxo-3-methylvalerate) and of (2R)-2,3-dihydroxy-3-methylbutanoate (2,3-dihydroxyisovalerate) into 2-oxo-3-methylbutanoate (2-oxoisovalerate), the penultimate precursor to L-isoleucine and L-valine, respectively. This is Dihydroxy-acid dehydratase from Wolinella succinogenes (strain ATCC 29543 / DSM 1740 / CCUG 13145 / JCM 31913 / LMG 7466 / NCTC 11488 / FDC 602W) (Vibrio succinogenes).